We begin with the raw amino-acid sequence, 337 residues long: Ornithine carbamoyltransferase, catabolic (337 aa).

Carbamoyl phosphate contacts are provided by residues 57-60, Gln-84, Arg-108, and 135-138; these read STRT and HPTQ. L-ornithine is bound by residues Asn-167, Asp-231, and 235–236; that span reads SM. Carbamoyl phosphate-binding positions include 272–273 and Arg-317; that span reads CL.

This sequence belongs to the aspartate/ornithine carbamoyltransferase superfamily. OTCase family.

Its subcellular location is the cytoplasm. It carries out the reaction carbamoyl phosphate + L-ornithine = L-citrulline + phosphate + H(+). It functions in the pathway amino-acid degradation; L-arginine degradation via ADI pathway; carbamoyl phosphate from L-arginine: step 2/2. Functionally, reversibly catalyzes the transfer of the carbamoyl group from carbamoyl phosphate (CP) to the N(epsilon) atom of ornithine (ORN) to produce L-citrulline. The polypeptide is Ornithine carbamoyltransferase, catabolic (Streptococcus ratti).